The primary structure comprises 228 residues: Leucyl/phenylalanyl-tRNA--protein transferase (228 aa).

The protein belongs to the L/F-transferase family.

It is found in the cytoplasm. It catalyses the reaction N-terminal L-lysyl-[protein] + L-leucyl-tRNA(Leu) = N-terminal L-leucyl-L-lysyl-[protein] + tRNA(Leu) + H(+). It carries out the reaction N-terminal L-arginyl-[protein] + L-leucyl-tRNA(Leu) = N-terminal L-leucyl-L-arginyl-[protein] + tRNA(Leu) + H(+). The catalysed reaction is L-phenylalanyl-tRNA(Phe) + an N-terminal L-alpha-aminoacyl-[protein] = an N-terminal L-phenylalanyl-L-alpha-aminoacyl-[protein] + tRNA(Phe). Its function is as follows. Functions in the N-end rule pathway of protein degradation where it conjugates Leu, Phe and, less efficiently, Met from aminoacyl-tRNAs to the N-termini of proteins containing an N-terminal arginine or lysine. The polypeptide is Leucyl/phenylalanyl-tRNA--protein transferase (Thiobacillus denitrificans (strain ATCC 25259 / T1)).